The chain runs to 293 residues: MSLFDWFADRRKGQSTGKITQEPEEGDGLWSKCPECGLVVYVKDLKGNASVCAGCGHHHRIDSHERIALIADPGSFEALNEALEPTDPLTFKDRRAYADRLRESQAATGLRDGVVTGLCRVDGLAMALAVMDFRFMGGSMGSVVGEKITRLVEEATARRLPLLIVCASGGARMQEGMLSLMQMAKISGALERHREAELLYMPLLTHPTTGGVTASFAMLGDLILAEPKALIGFAGRRVIEQTLREKLPDNFQTAEYLQDHGFVDTIVPRTQLRSSLASLLRLHGCRPMEITSA.

Residues 29 to 293 enclose the CoA carboxyltransferase N-terminal domain; sequence LWSKCPECGL…GCRPMEITSA (265 aa). C33, C36, C52, and C55 together coordinate Zn(2+). The C4-type zinc-finger motif lies at 33-55; that stretch reads CPECGLVVYVKDLKGNASVCAGC.

Belongs to the AccD/PCCB family. Acetyl-CoA carboxylase is a heterohexamer composed of biotin carboxyl carrier protein (AccB), biotin carboxylase (AccC) and two subunits each of ACCase subunit alpha (AccA) and ACCase subunit beta (AccD). Requires Zn(2+) as cofactor.

The protein localises to the cytoplasm. The enzyme catalyses N(6)-carboxybiotinyl-L-lysyl-[protein] + acetyl-CoA = N(6)-biotinyl-L-lysyl-[protein] + malonyl-CoA. The protein operates within lipid metabolism; malonyl-CoA biosynthesis; malonyl-CoA from acetyl-CoA: step 1/1. In terms of biological role, component of the acetyl coenzyme A carboxylase (ACC) complex. Biotin carboxylase (BC) catalyzes the carboxylation of biotin on its carrier protein (BCCP) and then the CO(2) group is transferred by the transcarboxylase to acetyl-CoA to form malonyl-CoA. The chain is Acetyl-coenzyme A carboxylase carboxyl transferase subunit beta from Parasynechococcus marenigrum (strain WH8102).